Consider the following 379-residue polypeptide: Wnt inhibitory factor 1 (379 aa).

Positions 1 to 28 are cleaved as a signal peptide; the sequence is MARRSAFPAAALWLWSILLCLLALRAEA. Positions 38-177 constitute a WIF domain; the sequence is LWIDAHQARV…PQNAIFFKTC (140 aa). An N-linked (GlcNAc...) asparagine glycan is attached at Asn-88. 7 disulfide bridges follow: Cys-140–Cys-177, Cys-182–Cys-192, Cys-186–Cys-198, Cys-200–Cys-209, Cys-214–Cys-224, Cys-218–Cys-230, and Cys-232–Cys-241. EGF-like domains follow at residues 178-210, 211-242, 243-271, 274-306, and 307-338; these read QQAE…PHCE, KALC…VNCD, KANC…LEGE, EISK…DLCS, and KPVC…RHCN. The N-linked (GlcNAc...) asparagine glycan is linked to Asn-245. Cystine bridges form between Cys-246–Cys-256, Cys-250–Cys-262, Cys-278–Cys-288, Cys-282–Cys-294, Cys-296–Cys-305, Cys-310–Cys-320, Cys-314–Cys-326, and Cys-328–Cys-337. The interval 354–379 is disordered; sequence AQLRQHTPSLKKAEERRDPPESNYIW. Positions 364-373 are enriched in basic and acidic residues; the sequence is KKAEERRDPP.

In terms of assembly, interacts with MYOC.

The protein resides in the secreted. Binds to WNT proteins and inhibits their activities. May be involved in mesoderm segmentation. The polypeptide is Wnt inhibitory factor 1 (WIF1) (Homo sapiens (Human)).